Here is a 562-residue protein sequence, read N- to C-terminus: Glutamyl-tRNA(Gln) amidotransferase subunit B, chloroplastic/mitochondrial (562 aa).

Residues 48-76 (SVASNSKREPRPVKTRVMTQERGSGETQT) are disordered. Positions 64 to 76 (VMTQERGSGETQT) are enriched in polar residues.

Belongs to the GatB/GatE family. GatB subfamily. In terms of assembly, subunit of the heterotrimeric GatCAB amidotransferase (AdT) complex, composed of A, B and C subunits.

It is found in the mitochondrion. It localises to the plastid. The protein resides in the chloroplast. It carries out the reaction L-glutamyl-tRNA(Gln) + L-glutamine + ATP + H2O = L-glutaminyl-tRNA(Gln) + L-glutamate + ADP + phosphate + H(+). Its function is as follows. Allows the formation of correctly charged Gln-tRNA(Gln) through the transamidation of misacylated Glu-tRNA(Gln) in chloroplasts and mitochondria. The reaction takes place in the presence of glutamine and ATP through an activated gamma-phospho-Glu-tRNA(Gln). This chain is Glutamyl-tRNA(Gln) amidotransferase subunit B, chloroplastic/mitochondrial, found in Physcomitrium patens (Spreading-leaved earth moss).